Here is a 689-residue protein sequence, read N- to C-terminus: Glycine--tRNA ligase beta subunit (689 aa).

Belongs to the class-II aminoacyl-tRNA synthetase family. As to quaternary structure, tetramer of two alpha and two beta subunits.

Its subcellular location is the cytoplasm. It catalyses the reaction tRNA(Gly) + glycine + ATP = glycyl-tRNA(Gly) + AMP + diphosphate. The sequence is that of Glycine--tRNA ligase beta subunit from Salmonella paratyphi C (strain RKS4594).